Reading from the N-terminus, the 281-residue chain is Phosphatidylglycerol--prolipoprotein diacylglyceryl transferase (281 aa).

3 helical membrane-spanning segments follow: residues 11–31, 57–77, and 89–109; these read IIFT…VISF, LLYS…IIFY, and VFYI…AIIV. Arginine 140 is an a 1,2-diacyl-sn-glycero-3-phospho-(1'-sn-glycerol) binding site. The next 3 membrane-spanning stretches (helical) occupy residues 194 to 214, 222 to 242, and 255 to 275; these read PTQL…IYFF, GSIS…IEFF, and IITM…IIMY.

It belongs to the Lgt family.

The protein resides in the cell inner membrane. The enzyme catalyses L-cysteinyl-[prolipoprotein] + a 1,2-diacyl-sn-glycero-3-phospho-(1'-sn-glycerol) = an S-1,2-diacyl-sn-glyceryl-L-cysteinyl-[prolipoprotein] + sn-glycerol 1-phosphate + H(+). Its pathway is protein modification; lipoprotein biosynthesis (diacylglyceryl transfer). In terms of biological role, catalyzes the transfer of the diacylglyceryl group from phosphatidylglycerol to the sulfhydryl group of the N-terminal cysteine of a prolipoprotein, the first step in the formation of mature lipoproteins. In Buchnera aphidicola subsp. Acyrthosiphon pisum (strain APS) (Acyrthosiphon pisum symbiotic bacterium), this protein is Phosphatidylglycerol--prolipoprotein diacylglyceryl transferase.